Here is a 628-residue protein sequence, read N- to C-terminus: Chaperone protein HtpG (628 aa).

The segment at Met-1–Arg-334 is a; substrate-binding. The segment at Glu-335–Lys-550 is b. The segment at Met-551–Gly-628 is c.

The protein belongs to the heat shock protein 90 family. Homodimer.

The protein localises to the cytoplasm. In terms of biological role, molecular chaperone. Has ATPase activity. The polypeptide is Chaperone protein HtpG (Rhodopseudomonas palustris (strain HaA2)).